The chain runs to 489 residues: Retinoblastoma-binding protein 5 homolog (489 aa).

WD repeat units lie at residues 22 to 63, 64 to 103, 147 to 187, 195 to 234, 248 to 290, and 292 to 330; these read DCIS…KIIS, AHVH…LEHK, DSDG…VVAS, SSAT…TLGK, VNKT…KILH, and TKGE…NWSA. Residues 451 to 489 form a disordered region; sequence DVSLPDAPTDETHPLISSKASKDKQQPVGGKKAAGRTKK.

As to quaternary structure, core component of several methyltransferase-containing complexes. Component of the SET1 complex, composed at least of the catalytic subunit Set1, wds/WDR5, Wdr82, Rbbp5, ash2, Cfp1/CXXC1, hcf and Dpy-30L1. Component of the MLL3/4 complex composed at least of the catalytic subunit trr, ash2, Rbbp5, Dpy-30L1, wds, hcf, ptip, Pa1, Utx, Lpt and Ncoa6.

The protein resides in the nucleus. In terms of biological role, component of the SET1 complex that specifically di- and trimethylates 'Lys-4' of histone H3 and of the MLL3/4 complex which also methylates histone H3 'Lys-4'. This chain is Retinoblastoma-binding protein 5 homolog, found in Drosophila melanogaster (Fruit fly).